Reading from the N-terminus, the 756-residue chain is NADP-dependent malic enzyme (756 aa).

The segment at 1 to 428 (MTEQLRQAAL…KLTQFVYKTS (428 aa)) is malic enzyme. Catalysis depends on Tyr39, which acts as the Proton donor. Residue Lys94 is the Proton acceptor of the active site. A divalent metal cation contacts are provided by Glu136, Asp137, and Asp162. NADP(+) contacts are provided by residues 195-198 (AGAA), Asn288, and Asn320. The interval 429–756 (LFMRPIFSQA…AYAAVKAQQE (328 aa)) is phosphate acetyltransferase.

It in the N-terminal section; belongs to the malic enzymes family. This sequence in the C-terminal section; belongs to the phosphate acetyltransferase and butyryltransferase family. It depends on Mg(2+) as a cofactor. Requires Mn(2+) as cofactor.

It catalyses the reaction (S)-malate + NADP(+) = pyruvate + CO2 + NADPH. It carries out the reaction oxaloacetate + H(+) = pyruvate + CO2. This is NADP-dependent malic enzyme (maeB) from Haemophilus influenzae (strain ATCC 51907 / DSM 11121 / KW20 / Rd).